Here is a 673-residue protein sequence, read N- to C-terminus: Ion-translocating oxidoreductase complex subunit C (673 aa).

4Fe-4S ferredoxin-type domains are found at residues methionine 368 to tyrosine 397 and lysine 407 to phenylalanine 436. [4Fe-4S] cluster-binding residues include cysteine 377, cysteine 380, cysteine 383, cysteine 387, cysteine 416, cysteine 419, cysteine 422, and cysteine 426. The tract at residues glutamate 529–proline 554 is disordered.

Belongs to the 4Fe4S bacterial-type ferredoxin family. RnfC subfamily. In terms of assembly, the complex is composed of six subunits: RsxA, RsxB, RsxC, RsxD, RsxE and RsxG. Requires [4Fe-4S] cluster as cofactor.

The protein localises to the cell inner membrane. Part of a membrane-bound complex that couples electron transfer with translocation of ions across the membrane. Required to maintain the reduced state of SoxR. The protein is Ion-translocating oxidoreductase complex subunit C of Salmonella arizonae (strain ATCC BAA-731 / CDC346-86 / RSK2980).